A 191-amino-acid polypeptide reads, in one-letter code: tRNA-specific adenosine deaminase 2 (191 aa).

The region spanning 20–145 (EETEKWMEQA…SVLDIASADL (126 aa)) is the CMP/dCMP-type deaminase domain. Position 71 (histidine 71) interacts with Zn(2+). Catalysis depends on glutamate 73, which acts as the Proton donor. The Zn(2+) site is built by cysteine 107 and cysteine 110.

The protein belongs to the cytidine and deoxycytidylate deaminase family. ADAT2 subfamily. The cofactor is Zn(2+).

It catalyses the reaction adenosine(34) in tRNA + H2O + H(+) = inosine(34) in tRNA + NH4(+). Functionally, probably participates in deamination of adenosine-34 to inosine in many tRNAs. The polypeptide is tRNA-specific adenosine deaminase 2 (DEADC1) (Bos taurus (Bovine)).